A 561-amino-acid chain; its full sequence is Membrane protein insertase YidC (561 aa).

6 helical membrane-spanning segments follow: residues 7–27, 342–362, 368–388, 438–458, 469–489, and 516–536; these read ILIVALAIVSYVMVLKWNQDY, LELTVDYGFLWFIAQPIFWLL, LLGNWGWSIIVLTMLIKGLFF, LGGCLPILVQMPVFLALYWVL, WMLWITDLSIKDPFFILPIIM, and PIIFTFFFLWFPAGLVLYWVV.

It belongs to the OXA1/ALB3/YidC family. Type 1 subfamily. Interacts with the Sec translocase complex via SecD. Specifically interacts with transmembrane segments of nascent integral membrane proteins during membrane integration.

The protein localises to the cell inner membrane. Required for the insertion and/or proper folding and/or complex formation of integral membrane proteins into the membrane. Involved in integration of membrane proteins that insert both dependently and independently of the Sec translocase complex, as well as at least some lipoproteins. Aids folding of multispanning membrane proteins. The polypeptide is Membrane protein insertase YidC (Pseudomonas entomophila (strain L48)).